A 239-amino-acid polypeptide reads, in one-letter code: Leucine rich adaptor protein 1 (239 aa).

LRR repeat units lie at residues 55-83 and 93-114; these read LGDK…LVTL and LLEE…QYSL. Residues 107–116 are compositionally biased toward low complexity; it reads LTSSQYSLTG. 2 disordered regions span residues 107-139 and 200-219; these read LTSS…TDRL and KPPG…DESA. Serine 118, serine 126, serine 129, and serine 213 each carry phosphoserine.

In terms of assembly, forms a tripartite complex with CDC42BPA/CDC42BPB and MYO18A acting as an adapter connecting both. Its binding to CDC42BPA/CDC42BPB results in their activation by abolition of their negative autoregulation. Interacts with CDC42BPA and CDC42BPB.

It is found in the cytoplasm. Acts as an activator of the canonical NF-kappa-B pathway and drive the production of pro-inflammatory cytokines. Promotes the antigen (Ag)-presenting and priming function of dendritic cells via the canonical NF-kappa-B pathway. In concert with MYO18A and CDC42BPA/CDC42BPB, is involved in modulating lamellar actomyosin retrograde flow that is crucial to cell protrusion and migration. Activates CDC42BPA/CDC42BPB and targets it to actomyosin through its interaction with MYO18A, leading to MYL9/MLC2 phosphorylation and MYH9/MYH10-dependent actomyosin assembly in the lamella. This is Leucine rich adaptor protein 1 (LURAP1) from Homo sapiens (Human).